Reading from the N-terminus, the 479-residue chain is mRNA export factor ICP27 homolog (479 aa).

A compositionally biased stretch (low complexity) spans 1-15 (MVPSQRLSRTSSISS). 2 disordered regions span residues 1–77 (MVPS…PSSV) and 91–210 (KKWD…NKPW). Acidic residues predominate over residues 35–44 (TDCDMDPMEG). Basic and acidic residues predominate over residues 132-142 (EVHGCTDESYG). Residues Cys-354, His-445, Cys-449, and Cys-454 each contribute to the Zn(2+) site. A CHC2-type zinc finger spans residues 354–454 (CFLPNTRDYN…HTRDCRSASC (101 aa)).

This sequence belongs to the HHV-1 ICP27 protein family. Interacts with host XPO1 and with the XPO1 export pathway components small GTPase RAN and nucleoporin NUP214. Interacts with host SPEN, OTT1 and OTT3. Interacts with host SRSF1, SRSF3, SRSF7 and SRPK1. Interacts with host DHX9; this interaction may have an inhibitory effect on virion production. Interacts (via N-terminus) with host NXF1; this interaction plays a role in mRNA export. In terms of processing, phosphorylated by cellular protein kinase CK2.

It localises to the host nucleus. The protein resides in the host cytoplasm. Its function is as follows. Promotes the nuclear export of a subset of early and late viral mRNAs by interacting with mRNAs and cellular export proteins. Additionally may prevent the establishment of cellular antiviral state, by acting as an alternative splicing factor for cellular RNAs such as STAT1, resulting in a STAT1 mRNA incapable of producing the STAT1alpha isoform. The chain is mRNA export factor ICP27 homolog from Homo sapiens (Human).